Reading from the N-terminus, the 433-residue chain is MKNWRTLIFGLMFSVSTAFAAPQQMDKIAAVVNNGVVLESDINNRLQSVKRDAQHAGQQIPDEQTLRHQILERLIIDNILLQMAKQMGITIPDQALDSTIANIAAQNHITVDQMKHRIAADGMNFDTYRDQIRKEMLIAEVRNNEVRRRVTILPQEIDALVKQISNQNTNDTELNISHILIPLPENPDQAQMEKAMTVVQKIMSELKHGVDFGKLAIAYSADPQALKGGNMGWSRLQELPTLFAEQLQLAQKGAVVGPIRSGVGFHILKVNDIRGGNPTIAVTEVHARHILLRTSPVMTDDQARTKLQQIASDIRSGKTDFADAAKEFSDDPGSALRGGDLGWTAPDIYDPAFRDALMRLNKGEISQPVHSSFGWHLIQLLDTRKVDKTDVAQKDRAYRMLFNRKFTEEAQSWMQEQRASAYVKILDGNDAQQ.

The N-terminal stretch at 1–20 (MKNWRTLIFGLMFSVSTAFA) is a signal peptide. 2 consecutive PpiC domains span residues 171–272 (DTEL…KVND) and 282–382 (VTEV…QLLD).

The protein resides in the periplasm. The catalysed reaction is [protein]-peptidylproline (omega=180) = [protein]-peptidylproline (omega=0). Its function is as follows. Chaperone involved in the correct folding and assembly of outer membrane proteins. Recognizes specific patterns of aromatic residues and the orientation of their side chains, which are found more frequently in integral outer membrane proteins. May act in both early periplasmic and late outer membrane-associated steps of protein maturation. The sequence is that of Chaperone SurA from Photorhabdus laumondii subsp. laumondii (strain DSM 15139 / CIP 105565 / TT01) (Photorhabdus luminescens subsp. laumondii).